Consider the following 22-residue polypeptide: Cysteine protease inhibitor 4 (22 aa).

The protein belongs to the protease inhibitor I3 (leguminous Kunitz-type inhibitor) family. As to expression, tubers.

The protein resides in the vacuole. In terms of biological role, inhibitor of papain (cysteine protease). Does not inhibit trypsin, chymotrypsin nor elastase (serine proteases). May protect the plant by inhibiting proteases of invading organisms. This is Cysteine protease inhibitor 4 from Solanum tuberosum (Potato).